The chain runs to 220 residues: Fructose-6-phosphate aldolase (220 aa).

Lys85 functions as the Schiff-base intermediate with substrate in the catalytic mechanism.

Belongs to the transaldolase family. Type 3A subfamily. Homodecamer.

The protein localises to the cytoplasm. It carries out the reaction beta-D-fructose 6-phosphate = dihydroxyacetone + D-glyceraldehyde 3-phosphate. Functionally, catalyzes the reversible formation of fructose 6-phosphate from dihydroxyacetone and D-glyceraldehyde 3-phosphate via an aldolization reaction. The protein is Fructose-6-phosphate aldolase of Salmonella typhi.